The following is a 737-amino-acid chain: Polyribonucleotide nucleotidyltransferase (737 aa).

Residues Asp-489 and Asp-495 each coordinate Mg(2+). Residues 556-615 (PKIDTIKIDVDKIKIVIGKGGETIDKIIAETGVKIDIDEEGNVSIYSSDQDAINRAKEII) enclose the KH domain. Positions 625 to 693 (DEVYRAKVVR…EKGRIDASMK (69 aa)) constitute an S1 motif domain. The tract at residues 691-737 (SMKALLPRPPKPEHDEKGEKSERPHRPRHQKDHKPKKEFTETPKDSE) is disordered. Residues 700-714 (PKPEHDEKGEKSERP) are compositionally biased toward basic and acidic residues. Basic residues predominate over residues 715–724 (HRPRHQKDHK). Over residues 725–737 (PKKEFTETPKDSE) the composition is skewed to basic and acidic residues.

The protein belongs to the polyribonucleotide nucleotidyltransferase family. The cofactor is Mg(2+).

It is found in the cytoplasm. The enzyme catalyses RNA(n+1) + phosphate = RNA(n) + a ribonucleoside 5'-diphosphate. Functionally, involved in mRNA degradation. Catalyzes the phosphorolysis of single-stranded polyribonucleotides processively in the 3'- to 5'-direction. The polypeptide is Polyribonucleotide nucleotidyltransferase (Streptococcus pneumoniae (strain JJA)).